The following is a 123-amino-acid chain: Large ribosomal subunit protein bL12 (123 aa).

The interval 96–123 (NVKEGVSKEEAEGLKKSLEEAGATVELK) is disordered. Positions 100 to 114 (GVSKEEAEGLKKSLE) are enriched in basic and acidic residues.

The protein belongs to the bacterial ribosomal protein bL12 family. As to quaternary structure, homodimer. Part of the ribosomal stalk of the 50S ribosomal subunit. Forms a multimeric L10(L12)X complex, where L10 forms an elongated spine to which 2 to 4 L12 dimers bind in a sequential fashion. Binds GTP-bound translation factors.

Its function is as follows. Forms part of the ribosomal stalk which helps the ribosome interact with GTP-bound translation factors. Is thus essential for accurate translation. The chain is Large ribosomal subunit protein bL12 from Flavobacterium johnsoniae (strain ATCC 17061 / DSM 2064 / JCM 8514 / BCRC 14874 / CCUG 350202 / NBRC 14942 / NCIMB 11054 / UW101) (Cytophaga johnsonae).